Consider the following 492-residue polypeptide: Cytochrome P450 monooxygenase MYCFIDRAFT_204672 (492 aa).

A glycan (N-linked (GlcNAc...) asparagine) is linked at asparagine 116. Residues 269-293 traverse the membrane as a helical segment; that stretch reads FLISMIFISAANGCVVSGAMLYSIA. N-linked (GlcNAc...) asparagine glycosylation is present at asparagine 335. Cysteine 430 serves as a coordination point for heme.

It belongs to the cytochrome P450 family. Heme serves as cofactor.

The protein resides in the membrane. The protein operates within secondary metabolite biosynthesis. Cytochrome P450 monooxygenase; part of the gene cluster that mediates the biosynthesis of an emodin derivative that may be involved in black Sigatoka disease of banana. The pathway begins with the synthesis of atrochrysone thioester by the polyketide synthase PKS8-1. The atrochrysone carboxyl ACP thioesterase MYCFIDRAFT_190111 then breaks the thioester bond and releases the atrochrysone carboxylic acid from PKS8-1. The decarboxylase MYCFIDRAFT_34057 then catalyzes the concerted decarboxylation-elimination required to convert atochrysone carboxylic acid into emodin anthrone, which is further oxidized to emodin by the anthrone oxygenase MYCFIDRAFT_34418. The functions of the other tailoring enzymes as well as the final product of the cluster have still to be identified. The polypeptide is Cytochrome P450 monooxygenase MYCFIDRAFT_204672 (Pseudocercospora fijiensis (strain CIRAD86) (Black leaf streak disease fungus)).